Here is a 257-residue protein sequence, read N- to C-terminus: MKPLVIKLGGVLLDTPAAMENLFTALANYQQNFDRPLVIVHGGGCIVDELMQRLHLPVQKKNGLRVTPSDHIEIITGALAGIANKTLVAQAAKFHLNPVGLCLADGNLTYATQLDPELGHVATVVPKNPALLNNLLGEAFLPIISSIAVDKQGLLMNVNADQAATAIAALIQADLVMLSDVDGVLDANKQRLPELNGAQIEQLIKDNVITDGMVVKVNAALDAAKMLNQGVDIANWKYPEKLTALFAGEIIGTRIKP.

Substrate-binding positions include 43–44, Arg-65, and Asn-157; that span reads GG.

This sequence belongs to the acetylglutamate kinase family. ArgB subfamily.

It localises to the cytoplasm. It catalyses the reaction N-acetyl-L-glutamate + ATP = N-acetyl-L-glutamyl 5-phosphate + ADP. The protein operates within amino-acid biosynthesis; L-arginine biosynthesis; N(2)-acetyl-L-ornithine from L-glutamate: step 2/4. Its function is as follows. Catalyzes the ATP-dependent phosphorylation of N-acetyl-L-glutamate. In Pasteurella multocida (strain Pm70), this protein is Acetylglutamate kinase.